Consider the following 365-residue polypeptide: Validamycin A dioxygenase (365 aa).

The Fe2OG dioxygenase domain maps to 174–284 (HATWTQSVNW…LVSLVYFFDA (111 aa)). His203, Asp205, and His261 together coordinate Fe cation. The segment at 331 to 365 (GELSLSRPGSADSPGSSPADDHPSRPGRHPAQGPQ) is disordered. Low complexity predominate over residues 336–348 (SRPGSADSPGSSP).

It belongs to the iron/ascorbate-dependent oxidoreductase family. The cofactor is Fe(2+).

The enzyme catalyses validamycin A + 2-oxoglutarate + O2 = validamycin B + succinate + CO2 + H(+). It carries out the reaction validoxylamine A + 2-oxoglutarate + O2 = validoxylamine B + succinate + CO2 + H(+). It functions in the pathway antibiotic biosynthesis. In terms of biological role, involved in the biosynthesis of validamycin B, a component of the antifungal and antibiotic validamycin complex used as a crop protectant. Catalyzes the regioselective hydroxylation of validamycin A (4-O-beta-D-glucopyranosyl-validoxylamine A) at the C-6 position to yield validamycin B. To a lesser extent, also able to convert validoxylamine A to its hydroxylated derivative. The sequence is that of Validamycin A dioxygenase from Streptomyces hygroscopicus subsp. limoneus.